A 549-amino-acid polypeptide reads, in one-letter code: Glucose-6-phosphate isomerase (549 aa).

3 positions are modified to N6-acetyllysine: lysine 80, lysine 228, and lysine 234. Glutamate 355 serves as the catalytic Proton donor. Residues histidine 386 and lysine 514 contribute to the active site.

Belongs to the GPI family.

The protein localises to the cytoplasm. The catalysed reaction is alpha-D-glucose 6-phosphate = beta-D-fructose 6-phosphate. It functions in the pathway carbohydrate biosynthesis; gluconeogenesis. The protein operates within carbohydrate degradation; glycolysis; D-glyceraldehyde 3-phosphate and glycerone phosphate from D-glucose: step 2/4. Its function is as follows. Catalyzes the reversible isomerization of glucose-6-phosphate to fructose-6-phosphate. In Escherichia coli (strain SMS-3-5 / SECEC), this protein is Glucose-6-phosphate isomerase.